The primary structure comprises 225 residues: Pyrimidine 5'-nucleotidase YjjG (225 aa).

Asp-9 functions as the Nucleophile in the catalytic mechanism.

It belongs to the HAD-like hydrolase superfamily. YjjG family. Monomer, homodimer and possibly homotetramer in solution. It depends on Mn(2+) as a cofactor. Mg(2+) serves as cofactor. Co(2+) is required as a cofactor.

The protein localises to the cytoplasm. It carries out the reaction a ribonucleoside 5'-phosphate + H2O = a ribonucleoside + phosphate. It catalyses the reaction a 2'-deoxyribonucleoside 5'-phosphate + H2O = a 2'-deoxyribonucleoside + phosphate. The catalysed reaction is UMP + H2O = uridine + phosphate. The enzyme catalyses dUMP + H2O = 2'-deoxyuridine + phosphate. It carries out the reaction dTMP + H2O = thymidine + phosphate. With respect to regulation, in contrast to nucleotidases from other families, is not inhibited by ribo- and deoxyribonucleoside di- and triphosphates. In terms of biological role, nucleotidase that shows high phosphatase activity toward non-canonical pyrimidine nucleotides and three canonical nucleoside 5'-monophosphates (UMP, dUMP, and dTMP), and very low activity against TDP, IMP, UDP, GMP, dGMP, AMP, dAMP, and 6-phosphogluconate. Appears to function as a house-cleaning nucleotidase in vivo, since the general nucleotidase activity of YjjG allows it to protect cells against non-canonical pyrimidine derivatives such as 5-fluoro-2'-deoxyuridine, 5-fluorouridine, 5-fluoroorotate, 5-fluorouracil, and 5-aza-2'-deoxycytidine, and prevents the incorporation of potentially mutagenic nucleotides into DNA. Its dUMP phosphatase activity that catalyzes the hydrolysis of dUMP to deoxyuridine is necessary for thymine utilization via the thymine salvage pathway. Is strictly specific to substrates with 5'-phosphates and shows no activity against nucleoside 2'- or 3'-monophosphates. In Escherichia coli (strain K12), this protein is Pyrimidine 5'-nucleotidase YjjG (yjjG).